The chain runs to 830 residues: AdoMet-dependent rRNA methyltransferase SPB1 (830 aa).

Residues Gly-58, Trp-60, Asp-78, Asp-94, and Asp-119 each coordinate S-adenosyl-L-methionine. Lys-159 (proton acceptor) is an active-site residue. Residues 345–388 (LTEEEQIEKELQEMQQKQNLKKKREKRKQNEIKQKEITRMQMQM) are a coiled coil. 2 disordered regions span residues 485–529 (AKEA…SDSD) and 565–642 (EADL…AREV). Composition is skewed to acidic residues over residues 516–529 (VDDDDSDVSDSDSD), 591–610 (VSEESSSDEEEAEEESDSDF), and 618–630 (DESDDDYDSEDEA). Residues 631 to 642 (ERSQKEKHAREV) are compositionally biased toward basic and acidic residues.

This sequence belongs to the class I-like SAM-binding methyltransferase superfamily. RNA methyltransferase RlmE family. SPB1 subfamily. In terms of assembly, component of the nucleolar and nucleoplasmic pre-60S ribosomal particle.

The protein localises to the nucleus. The protein resides in the nucleolus. The catalysed reaction is a ribonucleotide in rRNA + S-adenosyl-L-methionine = a 2'-O-methylribonucleotide in rRNA + S-adenosyl-L-homocysteine + H(+). Its function is as follows. Required for proper assembly of pre-ribosomal particles during the biogenesis of the 60S ribosomal subunit. The polypeptide is AdoMet-dependent rRNA methyltransferase SPB1 (Eremothecium gossypii (strain ATCC 10895 / CBS 109.51 / FGSC 9923 / NRRL Y-1056) (Yeast)).